We begin with the raw amino-acid sequence, 530 residues long: Feruloyl esterase C (530 aa).

A signal peptide spans 1 to 25 (MMLTSAILLLTLGVQLSHADDSSRE). Cystine bridges form between Cys-31-Cys-78, Cys-66-Cys-117, Cys-190-Cys-444, Cys-259-Cys-276, Cys-285-Cys-294, and Cys-506-Cys-528. Ser-191 (acyl-ester intermediate) is an active-site residue. Ca(2+)-binding residues include Asp-260, Asp-263, Ala-265, Asp-267, and Val-269. Active-site charge relay system residues include Asp-403 and His-443.

Belongs to the tannase family.

It is found in the secreted. It catalyses the reaction feruloyl-polysaccharide + H2O = ferulate + polysaccharide.. Functionally, involved in degradation of plant cell walls. Hydrolyzes the feruloyl-arabinose ester bond in arabinoxylans as well as the feruloyl-galactose and feruloyl-arabinose ester bonds in pectin. Active against methyl esters of sinapate (MSA) and caffeate (MCA). The sequence is that of Feruloyl esterase C (faeC) from Talaromyces stipitatus (strain ATCC 10500 / CBS 375.48 / QM 6759 / NRRL 1006) (Penicillium stipitatum).